Reading from the N-terminus, the 515-residue chain is Bifunctional dihydrofolate reductase-thymidylate synthase (515 aa).

Positions 26-228 (AFSIVVAADQ…LSYEIMKYVP (203 aa)) constitute a DHFR domain. Residue V30 participates in substrate binding. NADP(+)-binding positions include A32, 38-44 (GIGDGET), 81-83 (RKT), and 101-104 (LSCR). Residues I154, Y160, and T178 each coordinate substrate. An NADP(+)-binding site is contributed by 155–162 (GGARVYTE). Positions 233 to 515 (ERQYLELIDR…YPPIKMEMAV (283 aa)) are thymidylate synthase. R253 provides a ligand contact to dUMP. Residue C395 is part of the active site. Residues H396, 416–420 (QRCCD), N428, and 458–460 (HVY) contribute to the dUMP site.

The protein in the N-terminal section; belongs to the dihydrofolate reductase family. This sequence in the C-terminal section; belongs to the thymidylate synthase family.

The catalysed reaction is (6S)-5,6,7,8-tetrahydrofolate + NADP(+) = 7,8-dihydrofolate + NADPH + H(+). The enzyme catalyses dUMP + (6R)-5,10-methylene-5,6,7,8-tetrahydrofolate = 7,8-dihydrofolate + dTMP. Its pathway is cofactor biosynthesis; tetrahydrofolate biosynthesis; 5,6,7,8-tetrahydrofolate from 7,8-dihydrofolate: step 1/1. Bifunctional enzyme. Involved in de novo dTMP biosynthesis. Key enzyme in folate metabolism. Catalyzes an essential reaction for de novo glycine and purine synthesis, DNA precursor synthesis, and for the conversion of dUMP to dTMP. The sequence is that of Bifunctional dihydrofolate reductase-thymidylate synthase from Crithidia fasciculata.